Reading from the N-terminus, the 247-residue chain is MSKLFWAMLAFISRLPVPSRWSQGLDFEQYSRGIVMFPFIGLILGGISGLIFILLQPWCGIPLAALFCILALALLTGGFHLDGLADTCDGIFSARRRERMLEIMRDSRLGTHGGLALIFVLLAKILVVSELALRGTPMLAALAAACAAGRGSAVLLMYRHRYAREEGLGNVFIGKVSGRQTCITLGLAVIVATVLLLGMQGLATMVVTLAAIFILGQLLKRTLGGQTGDTLGAAIELGELIFLLALL.

Transmembrane regions (helical) follow at residues 34 to 54, 59 to 79, 113 to 133, 138 to 158, and 194 to 214; these read IVMF…IFIL, CGIP…TGGF, GGLA…ELAL, MLAA…LLMY, and VLLL…AIFI.

Belongs to the CobS family. Mg(2+) serves as cofactor.

The protein resides in the cell inner membrane. The enzyme catalyses alpha-ribazole + adenosylcob(III)inamide-GDP = adenosylcob(III)alamin + GMP + H(+). It catalyses the reaction alpha-ribazole 5'-phosphate + adenosylcob(III)inamide-GDP = adenosylcob(III)alamin 5'-phosphate + GMP + H(+). Its pathway is cofactor biosynthesis; adenosylcobalamin biosynthesis; adenosylcobalamin from cob(II)yrinate a,c-diamide: step 7/7. Its function is as follows. Joins adenosylcobinamide-GDP and alpha-ribazole to generate adenosylcobalamin (Ado-cobalamin). Also synthesizes adenosylcobalamin 5'-phosphate from adenosylcobinamide-GDP and alpha-ribazole 5'-phosphate. This is Adenosylcobinamide-GDP ribazoletransferase from Salmonella typhi.